We begin with the raw amino-acid sequence, 84 residues long: Kappa-scoloptoxin(11)-Ssm3a (84 aa).

A signal peptide spans methionine 1–lysine 16.

It belongs to the scoloptoxin-11 family. Post-translationally, contains 2 disulfide bonds. As to expression, expressed by the venom gland.

The protein localises to the secreted. Functionally, inhibits voltage-gated potassium channel currents in DRG neurons. 200 nM of the toxin inhibits current amplitude by only 25% and even at concentrations up to 5 uM, the toxin does not inhibit all potassium currents. In vivo, insects injected with this toxin showed signs of neurotoxicity including twitching, paralysis, and body contraction. In Scolopendra mutilans (Chinese red-headed centipede), this protein is Kappa-scoloptoxin(11)-Ssm3a.